The primary structure comprises 659 residues: Exoribonuclease 2 (659 aa).

An RNB domain is found at 189–531 (RKDLTALHFV…NHRLIKACIA (343 aa)). The 83-residue stretch at 576–658 (KPEFQAEVQD…ETRSLIGNLV (83 aa)) folds into the S1 motif domain.

The protein belongs to the RNR ribonuclease family. RNase II subfamily.

Its subcellular location is the cytoplasm. It catalyses the reaction Exonucleolytic cleavage in the 3'- to 5'-direction to yield nucleoside 5'-phosphates.. Functionally, involved in mRNA degradation. Hydrolyzes single-stranded polyribonucleotides processively in the 3' to 5' direction. The protein is Exoribonuclease 2 of Actinobacillus succinogenes (strain ATCC 55618 / DSM 22257 / CCUG 43843 / 130Z).